The sequence spans 228 residues: MSYTEKPDEITKDEWMEKLNNLHVQRADMNRLIMNYLVTEGFKEAAEKFRMESGIEPSVDLETLDERIKIREMILKGQIQEAIALINSLHPELLDTNRYLYFHLQQQHLIELIRQRETEAALEFAQTQLAEQGEESRECLTEMERTLALLAFDNPEDSPFGDLLNMMQRQKVWSEVNQAVLDYENRESTPKLAKLLKLLLWAQNELDQKKVKYPKMTDLSKGVIEEPK.

A LisH domain is found at 25-57 (QRADMNRLIMNYLVTEGFKEAAEKFRMESGIEP). The CTLH domain occupies 63–120 (TLDERIKIREMILKGQIQEAIALINSLHPELLDTNRYLYFHLQQQHLIELIRQRETEA). An interaction with CTNNB1 region spans residues 116-212 (RETEAALEFA…QNELDQKKVK (97 aa)).

The protein belongs to the GID8 family. In terms of assembly, homodimer; may also form higher oligomers. Identified in the CTLH complex that contains GID4, RANBP9 and/or RANBP10, MKLN1, MAEA, RMND5A (or alternatively its paralog RMND5B), GID8, ARMC8, WDR26 and YPEL5. Within this complex, MAEA, RMND5A (or alternatively its paralog RMND5B), GID8, WDR26, and RANBP9 and/or RANBP10 form the catalytic core, while GID4, MKLN1, ARMC8 and YPEL5 have ancillary roles. Interacts with RANBP9. Part of a complex consisting of RANBP9, MKLN1 and GID8. Interacts with CTNNB1, AXIN1 and GSK3B. In terms of processing, polyubiquitinated through 'Lys-48'-polyubiquitin chains, leading to proteasomal degradation in the absence of Wnt stimulation.

It is found in the cytoplasm. The protein localises to the nucleus. Core component of the CTLH E3 ubiquitin-protein ligase complex that selectively accepts ubiquitin from UBE2H and mediates ubiquitination and subsequent proteasomal degradation of the transcription factor HBP1. Acts as a positive regulator of Wnt signaling pathway by promoting beta-catenin (CTNNB1) nuclear accumulation. In Bos taurus (Bovine), this protein is Glucose-induced degradation protein 8 homolog (GID8).